A 350-amino-acid chain; its full sequence is DNA polymerase delta subunit 3 (350 aa).

Positions 131–350 (EEKSKPLVRP…LESFFKRKAK (220 aa)) are disordered. Basic and acidic residues-rich tracts occupy residues 146–162 (TTPEETTGRKSKSKDMG) and 172–195 (MKKDRDDKETSRQNELRKRKEENL). Thr223 is subject to Phosphothreonine. Phosphoserine is present on Ser230. Positions 234 to 248 (SPKETDSNDKDKNND) are enriched in basic and acidic residues. The span at 249–262 (DLEDLLETTAEDSL) shows a compositional bias: acidic residues. Residues 274 to 286 (SETEHSKEPKSEE) show a composition bias toward basic and acidic residues. Polar residues predominate over residues 320-332 (LSSSKKQETPSSN).

In terms of assembly, DNA polymerase delta is a heterotrimer of POL3, POL32 and HYS2. POL32 can form homodimers.

It localises to the nucleus. Its function is as follows. DNA polymerase delta (DNA polymerase III) participates in chromosomal DNA replication. It is required during synthesis of the leading and lagging DNA strands at the replication fork and binds at/or near replication origins and moves along DNA with the replication fork. It has 3'-5' proofreading exonuclease activity that correct errors arising during DNA replication. It is also involved in DNA synthesis during DNA repair. This chain is DNA polymerase delta subunit 3 (POL32), found in Saccharomyces cerevisiae (strain ATCC 204508 / S288c) (Baker's yeast).